A 446-amino-acid chain; its full sequence is Calcium-binding and coiled-coil domain-containing protein 2 (446 aa).

The short motif at 133–136 is the CLIR element; it reads ILVV. Positions 137 to 349 form a coiled coil; it reads TTQGEVEEIE…RENSRLLSYM (213 aa). The LIR-like motif lies at 203-206; sequence DYWE. Residues 371–381 form an interaction with LGALS8 region; the sequence is NPGLVYGNPYS. Residues 395–446 form an interaction with MYO6 region; that stretch reads KKCPICKADDICDHILEQQQMQPLCLNCPICDKIFPATEKQIFEDHVFCHSL. The UBZ1-type zinc-finger motif lies at 419-444; the sequence is CLNCPICDKIFPATEKQIFEDHVFCH. Zn(2+) contacts are provided by Cys-422, Cys-425, His-440, and His-444. Ser-445 is modified (phosphoserine).

This sequence belongs to the CALCOCO family. In terms of assembly, dimer. Part of a complex consisting of CALCOCO2, TAX1BP1 and MYO6. Interacts with MYO6. Interacts with GEMIN4. Interacts with ATG8 family members MAP1LC3A, MAP1LC3B, GABARAP, GABARAPL1 and GABARAPL2. Interacts with ATG8 family member MAP1LC3C. Interacts with LGALS8. Interacts with TOM1; the interaction is indirect and is mediated by MYO6, which acts as a bridge between TOM1 and CALCOCO2. Interacts with AZI2.

It localises to the cytoplasm. The protein localises to the perinuclear region. It is found in the cytoskeleton. Its subcellular location is the cytoplasmic vesicle. The protein resides in the autophagosome membrane. Functionally, xenophagy-specific receptor required for autophagy-mediated intracellular bacteria degradation. Acts as an effector protein of galectin-sensed membrane damage that restricts the proliferation of infecting pathogens upon entry into the cytosol by targeting LGALS8-associated bacteria for autophagy. Initially orchestrates bacteria targeting to autophagosomes and subsequently ensures pathogen degradation by regulating pathogen-containing autophagosome maturation. Bacteria targeting to autophagosomes relies on its interaction with MAP1LC3A, MAP1LC3B and/or GABARAPL2, whereas regulation of pathogen-containing autophagosome maturation requires the interaction with MAP3LC3C. May play a role in ruffle formation and actin cytoskeleton organization and seems to negatively regulate constitutive secretion. The protein is Calcium-binding and coiled-coil domain-containing protein 2 of Pongo abelii (Sumatran orangutan).